The chain runs to 416 residues: Tyrosine--tRNA ligase (416 aa).

Residues proline 55 to histidine 64 carry the 'HIGH' region motif. Positions lysine 249 to serine 253 match the 'KMSKS' region motif. ATP is bound at residue lysine 252. The region spanning threonine 352–asparagine 416 is the S4 RNA-binding domain.

It belongs to the class-I aminoacyl-tRNA synthetase family. TyrS type 2 subfamily. In terms of assembly, homodimer.

The protein localises to the cytoplasm. It carries out the reaction tRNA(Tyr) + L-tyrosine + ATP = L-tyrosyl-tRNA(Tyr) + AMP + diphosphate + H(+). Functionally, catalyzes the attachment of tyrosine to tRNA(Tyr) in a two-step reaction: tyrosine is first activated by ATP to form Tyr-AMP and then transferred to the acceptor end of tRNA(Tyr). In Prochlorococcus marinus (strain SARG / CCMP1375 / SS120), this protein is Tyrosine--tRNA ligase.